The following is a 459-amino-acid chain: Probable acetate kinase (459 aa).

N9 lines the Mg(2+) pocket. Position 16 (K16) interacts with ATP. Substrate is bound at residue R100. D156 serves as the catalytic Proton donor/acceptor. ATP is bound by residues 216-220 (HLGSG) and 299-301 (DFR). Residues 308-338 (TTTSSPTPSPNPNPNPNPDPNPDPNPDPQNQ) form a disordered region. The segment covering 314–334 (TPSPNPNPNPNPDPNPDPNPD) has biased composition (pro residues). Position 441 (E441) interacts with Mg(2+).

The protein belongs to the acetokinase family. It depends on Mg(2+) as a cofactor.

The catalysed reaction is acetate + ATP = acetyl phosphate + ADP. The protein operates within metabolic intermediate biosynthesis; acetyl-CoA biosynthesis; acetyl-CoA from acetate: step 1/2. The sequence is that of Probable acetate kinase from Chaetomium globosum (strain ATCC 6205 / CBS 148.51 / DSM 1962 / NBRC 6347 / NRRL 1970) (Soil fungus).